Reading from the N-terminus, the 775-residue chain is MTLTPMEDKGIIPNFNDFKRQLAELLQSRSTVEDITLLQGFLQLVHSKTQQWRGAEGLPATPDLLDAVWKEIHYPIFKWFQQWRAHLLEAAEGGPQERTYISFRRMNGKLNKIFKIIRQFYNGLVQQLFDRYDFGKLLPAGVIRELNVQSGGELQTLDDSSYFTILCVMSLQRCLLYLGCCHRYKCCCSKLSKRFHISDFDDSMRYFMLAKQIVPSVGETYLQEGLVYVQTGNYGHAAYAFMRGSLSRMPTDAGIPNLESIVADASSGLFAKHQGILKRLRSKESDSNKLINREVLEFYFLALFSSVYAPESWSKQGSDIRHCTEILFEKVRSRYARNVRLILQDVLLFIGGFDLVIKKAKAMGLNRSDTLPSNCTAFLETAFDFFSHVIDSVVLKEWQSFDTWEYLALVRVICVWIKSHSIVTQFAHRHTQFCQSVAHLLNNILAHTEYQQLMDVEHRPKRDYFFQEDIMLKDFSAIGHTLSDFNDVDLFQMENLPDRLAGLVDDKLTAKEEGLLKLHAIVFIGKKFLANNDVNIVWCDESKRFNSLKPDVPLRTCSPPKAKTPPPSTSDYTPAGAKQTKKSKPKRNSRRVQSLSSLEAKLMERKGLRQSVAEGRVYSGCSVPAAPMSFDVAPSAHLYQDRAAGTSATQEAATYYNQGYNGPMQLGSTEILNSRSPSGNNRIAFHPSHQAYMQMIQTPQPQAWPTAYGHNAYYSQPTQHPYPMSSQLAQFQNGPIPFVAGPYAMYMPPPGPGMVVLNNGHPMIPNESPPQQHYP.

The segment at 550–597 is disordered; sequence PDVPLRTCSPPKAKTPPPSTSDYTPAGAKQTKKSKPKRNSRRVQSLSS. A compositionally biased stretch (basic residues) spans 579–590; sequence QTKKSKPKRNSR.

It belongs to the EST1 family.

Its subcellular location is the nucleus. The protein localises to the chromosome. The protein resides in the telomere. Functionally, involved in telomere maintenance. This is Protein EBS1 (EBS1) from Eremothecium gossypii (strain ATCC 10895 / CBS 109.51 / FGSC 9923 / NRRL Y-1056) (Yeast).